Here is a 132-residue protein sequence, read N- to C-terminus: Small ribosomal subunit protein uS8 (132 aa).

Belongs to the universal ribosomal protein uS8 family. In terms of assembly, part of the 30S ribosomal subunit. Contacts proteins S5 and S12.

In terms of biological role, one of the primary rRNA binding proteins, it binds directly to 16S rRNA central domain where it helps coordinate assembly of the platform of the 30S subunit. This is Small ribosomal subunit protein uS8 from Bartonella tribocorum (strain CIP 105476 / IBS 506).